Here is a 519-residue protein sequence, read N- to C-terminus: Flavin-dependent halogenase rdc2 (519 aa).

Residues Met1–Ala21 form the signal peptide. FAD is bound by residues Gly14, Ala17, and Glu47. Positions 324 and 325 each coordinate chloride.

The protein belongs to the flavin-dependent halogenase family.

The protein operates within secondary metabolite biosynthesis. Functionally, flavin-dependent halogenase; part of the gene cluster that mediates the biosynthesis of radicicol, a resorcylic acid lactone (RAL) that irreversibly inhibits the HSP90 molecular chaperone, an important target for cancer chemotherapy. Within the cluster, rdc2 is involved in the chlorination of the resorcylic acid lactone (RAL) structure to convert monocillin I into radicicol. Also chlorinates monocillin II to produce 6-cholomonocillin II and monocilllin IV to produce 13-chloromonocillin IV. In contrast to most fungal halogenases, rdc2 has a broad substrate specificity and can accept a variety of macrolactones as the substrates to generate chlorinated derivatives, including dihydroresorcylide, zearalenone, curvularin, or even curcumin. Rdc2 is able to dichlorinate dihydroresorcylide and monocillin IV. Dihydroresorcylide is first chlorinated at position 11 to produce 11-chlorodihydroresorcylide which can be further chlorinated by rdc2 at possition 13. Mororeover, rdc2 can incorporate bromine into dihydroresorcylide to yield the corresponding mono- and di-brominated derivatives. Finally, rdc2 is also able to halogenate the isoquinolines 4-hydroxyisoquinoline and 6-hydroxyisoquinoline into 3-chloro-4-hydroxyisoquinoline and 5-chloro-6-hydroxyisoquinoline, respectively. The radicicol cluster encodes only two apparent post-PKS enzymes, a cytochrome P450 monooxygenase (rdc4) and a non-heme halogenase (rdc2) that could introduce the epoxide and the chlorine, respectively. If this cluster includes all the genes required for radicicol biosynthesis, the remaining structural features of radicicol are presumably generated by the PKSs rdc1 and rdc5. The C-2' ketone could arise if the R-PKS rdc5 and NR-PKS rdc1 each carry out four iterations, in contrast to the five iteration-three iteration split for the hypothemycin PKSs. The origin of the cis 5',6' double bond is not known. The radicicol R-PKS rdc5 ER domain may catalyze either double bond isomerization or reduction in the third iteration. This is Flavin-dependent halogenase rdc2 from Metacordyceps chlamydosporia (Nematophagous fungus).